Consider the following 431-residue polypeptide: NADH-quinone oxidoreductase subunit D 2 (431 aa).

The tract at residues 1–27 (MNDHKGLGGLDTEATPGSFGAGEPPRA) is disordered.

It belongs to the complex I 49 kDa subunit family. In terms of assembly, NDH-1 is composed of 14 different subunits. Subunits NuoB, C, D, E, F, and G constitute the peripheral sector of the complex.

Its subcellular location is the cell inner membrane. The enzyme catalyses a quinone + NADH + 5 H(+)(in) = a quinol + NAD(+) + 4 H(+)(out). NDH-1 shuttles electrons from NADH, via FMN and iron-sulfur (Fe-S) centers, to quinones in the respiratory chain. The immediate electron acceptor for the enzyme in this species is believed to be ubiquinone. Couples the redox reaction to proton translocation (for every two electrons transferred, four hydrogen ions are translocated across the cytoplasmic membrane), and thus conserves the redox energy in a proton gradient. The polypeptide is NADH-quinone oxidoreductase subunit D 2 (Anaeromyxobacter sp. (strain Fw109-5)).